Consider the following 328-residue polypeptide: Olfactory receptor 2AJ1 (328 aa).

Topologically, residues 1 to 25 are extracellular; that stretch reads MGHQNHTFSSDFILLGLFSSSPTSV. Asparagine 5 carries an N-linked (GlcNAc...) asparagine glycan. A helical transmembrane segment spans residues 26-49; sequence VFFLVLFVIFIMSVTENTLMILLI. The Cytoplasmic portion of the chain corresponds to 50-57; that stretch reads RSDSRLHT. Residues 58 to 79 traverse the membrane as a helical segment; sequence PMYFLLSHLSLMDILHVSNIVP. Over 80-100 the chain is Extracellular; sequence KMVTNFLSGSRTISFAGCGFQ. Cysteine 97 and cysteine 189 are joined by a disulfide. A helical transmembrane segment spans residues 101–120; sequence VFLSLTLLGGECLLLAAMSC. The Cytoplasmic portion of the chain corresponds to 121–139; sequence DRYVAICHPLRYPILMKEY. A helical membrane pass occupies residues 140 to 158; the sequence is ASALMAGGSWLIGVFNSTV. The Extracellular portion of the chain corresponds to 159–195; that stretch reads HTAYALQFPFCGSRAIDHFFCEVPAMLKLSCADTTRY. A helical transmembrane segment spans residues 196–219; sequence ERGVCVSAVIFLLIPFSLISASYG. Residues 220–236 are Cytoplasmic-facing; that stretch reads QIILTVLQMKSSEARKK. A helical membrane pass occupies residues 237 to 259; that stretch reads SFSTCSFHMIVVTMYYGPFIFTY. The Extracellular segment spans residues 260 to 272; it reads MRPKSYHTPGQDK. A helical transmembrane segment spans residues 273 to 292; that stretch reads FLAIFYTILTPTLNPFIYSF. The Cytoplasmic segment spans residues 293–328; sequence RNKDVLAVMKNMLKSNFLHKKMNRKIPECVFCLFLC.

The protein belongs to the G-protein coupled receptor 1 family.

The protein localises to the cell membrane. In terms of biological role, odorant receptor. The protein is Olfactory receptor 2AJ1 (OR2AJ1) of Homo sapiens (Human).